We begin with the raw amino-acid sequence, 114 residues long: UPF0145 protein TTHA1944 (114 aa).

This sequence belongs to the UPF0145 family.

The chain is UPF0145 protein TTHA1944 from Thermus thermophilus (strain ATCC 27634 / DSM 579 / HB8).